Consider the following 330-residue polypeptide: MAQNLPTIALLATGGTIAGSGASASLGSYKSGELGIKELLKAIPSLNRLARIQGEQISNIGSQDMNEEVWFKLAKRAQELLDDSRIQGVVITHGTDTLEESAYFLNLVLRSTKPVVLVGAMRNAASLSADGALNLYNAVSVALNEKSANKGVLVVMDDNIFSAREVIKTHTTHTSTFKALNSGAIGSVYYGKTRYYMQPLRKHTTESEFSLSQLKTPLPKVDIIYTHAGMTPDLFQASLNSHAKGVVIAGVGNGNVSAGFLKAMQEASQMGVVIVRSSRVNSGEITSGEIDDKAFITSDNLNPQKARVLLQLALTKTNNKEKIQEMFEEY.

The Asparaginase/glutaminase domain occupies 6–330 (PTIALLATGG…EKIQEMFEEY (325 aa)). Thr16 functions as the O-isoaspartyl threonine intermediate in the catalytic mechanism. Substrate is bound by residues Ser62 and 95-96 (TD).

Belongs to the asparaginase 1 family.

It is found in the cytoplasm. The enzyme catalyses L-asparagine + H2O = L-aspartate + NH4(+). The protein is Probable L-asparaginase (ansA) of Helicobacter pylori (strain ATCC 700392 / 26695) (Campylobacter pylori).